The chain runs to 764 residues: 5-methyltetrahydropteroyltriglutamate--homocysteine methyltransferase (764 aa).

5-methyltetrahydropteroyltri-L-glutamate contacts are provided by residues 16-19 (RELK) and lysine 117. L-homocysteine is bound by residues 442–444 (IGS) and glutamate 495. L-methionine is bound by residues 442 to 444 (IGS) and glutamate 495. 5-methyltetrahydropteroyltri-L-glutamate-binding positions include 526–527 (RC) and tryptophan 572. Residue aspartate 610 participates in L-homocysteine binding. Aspartate 610 contributes to the L-methionine binding site. Residue glutamate 616 coordinates 5-methyltetrahydropteroyltri-L-glutamate. Zn(2+) contacts are provided by histidine 652, cysteine 654, and glutamate 676. Histidine 705 (proton donor) is an active-site residue. Cysteine 737 serves as a coordination point for Zn(2+).

The protein belongs to the vitamin-B12 independent methionine synthase family. Zn(2+) serves as cofactor.

The enzyme catalyses 5-methyltetrahydropteroyltri-L-glutamate + L-homocysteine = tetrahydropteroyltri-L-glutamate + L-methionine. It functions in the pathway amino-acid biosynthesis; L-methionine biosynthesis via de novo pathway; L-methionine from L-homocysteine (MetE route): step 1/1. Catalyzes the transfer of a methyl group from 5-methyltetrahydrofolate to homocysteine resulting in methionine formation. This is 5-methyltetrahydropteroyltriglutamate--homocysteine methyltransferase from Bordetella pertussis (strain Tohama I / ATCC BAA-589 / NCTC 13251).